Reading from the N-terminus, the 1761-residue chain is Nonribosomal peptide synthetase 6 (1761 aa).

An adenylation region spans residues 63–468; it reads ERAALHPEKI…GRQDQQVKLR (406 aa). The Carrier 1 domain maps to 600–675; it reads EATTEMELKL…AMAEKAKPVS (76 aa). The residue at position 636 (Ser636) is an O-(pantetheine 4'-phosphoryl)serine. The segment at 712 to 1135 is condensation 1; sequence VEDVYPCTPL…AVLDPAEARD (424 aa). Carrier domains follow at residues 1169-1242 and 1237-1313; these read SPNE…SNER and SASN…EEEM. An O-(pantetheine 4'-phosphoryl)serine mark is found at Ser1203 and Ser1274. The tract at residues 1354-1677 is condensation 2; the sequence is IYPTRPLQQL…DKVQWFDTVV (324 aa).

It belongs to the NRP synthetase family.

The protein operates within siderophore biosynthesis. In terms of biological role, NRPS involved in extracellular coprogen-type siderophores biosynthesis including coprogen, neocoprogen I and neocoprogen II. The role of extracellular siderophores in fungal virulence to plants is to supply iron to the fungus during plant infection, but not to act as phytotoxins, depriving their hosts of iron. This is Nonribosomal peptide synthetase 6 from Cochliobolus miyabeanus (Brown spot disease fungus).